The chain runs to 279 residues: uncharacterized protein (279 aa).

Positions 60 to 92 are disordered; sequence RKANKLNNKQDSTFFNSASGETNNTILPPGVKN. The segment covering 70-85 has biased composition (polar residues); that stretch reads DSTFFNSASGETNNTI. Helical transmembrane passes span 156-176, 202-222, and 237-257; these read IVGYTNLVIVAFFAGLLAVMN, ISIFVISIVTLPFWTMFILFL, and FIWIVLIINVVLLLVSCLLMI.

It is found in the cell membrane. This is an uncharacterized protein from Mycoplasma genitalium (strain ATCC 33530 / DSM 19775 / NCTC 10195 / G37) (Mycoplasmoides genitalium).